A 490-amino-acid chain; its full sequence is Bifunctional NAD(P)H-hydrate repair enzyme Nnr (490 aa).

The region spanning 1 to 204 (MKEIDELTIK…NIGHPVHLIN (204 aa)) is the YjeF N-terminal domain. Residues 1 to 204 (MKEIDELTIK…NIGHPVHLIN (204 aa)) form an NAD(P)H-hydrate epimerase region. The segment at 51 to 55 (NNGGD) is NADPHX 1; for epimerase activity. K(+) is bound by residues asparagine 52 and aspartate 114. Residues 118-124 (GTGLRGE) form an NADPHX 1; for epimerase activity region. Residues tyrosine 129 and aspartate 147 each coordinate (6S)-NADPHX. A K(+)-binding site is contributed by serine 150. One can recognise a YjeF C-terminal domain in the interval 212 to 488 (TREMVRSLLP…RLIPEAIRRL (277 aa)). Residues 212 to 490 (TREMVRSLLP…IPEAIRRLKE (279 aa)) are ADP-dependent (S)-NAD(P)H-hydrate dehydratase. Glycine 317 provides a ligand contact to (6S)-NADPHX. The NADPHX 2; for dehydratase activity stretch occupies residues 366–372 (HPGEMAR). ADP-binding positions include 402 to 406 (KSATT) and 421 to 430 (NTGLSKGGSG). Position 431 (aspartate 431) interacts with (6S)-NADPHX.

This sequence in the N-terminal section; belongs to the NnrE/AIBP family. The protein in the C-terminal section; belongs to the NnrD/CARKD family. Requires K(+) as cofactor.

It carries out the reaction (6S)-NADHX + ADP = AMP + phosphate + NADH + H(+). The enzyme catalyses (6S)-NADPHX + ADP = AMP + phosphate + NADPH + H(+). It catalyses the reaction (6R)-NADHX = (6S)-NADHX. The catalysed reaction is (6R)-NADPHX = (6S)-NADPHX. Bifunctional enzyme that catalyzes the epimerization of the S- and R-forms of NAD(P)HX and the dehydration of the S-form of NAD(P)HX at the expense of ADP, which is converted to AMP. This allows the repair of both epimers of NAD(P)HX, a damaged form of NAD(P)H that is a result of enzymatic or heat-dependent hydration. This chain is Bifunctional NAD(P)H-hydrate repair enzyme Nnr (nnr), found in Thermotoga maritima (strain ATCC 43589 / DSM 3109 / JCM 10099 / NBRC 100826 / MSB8).